A 395-amino-acid polypeptide reads, in one-letter code: MEQPHLAYRAFCQSREAAGQWRQLHAVQPLPRGRVLRDGVELINFSSNNYMGLADHPLLKQRAMAWTEQWGTGAQASRLVCGDLEPFARIEARLVAGKGCEAALVLNAGYQANSSVIPALLDKRVLGGEPLVFSDRLNHASMHHGVQLAGVRQLRYRHGDLDHLERLLKRHAGEKVAKFILSETVFSMDGDRIDVGGLIALKQRYGAFLYLDEAHATGVLGPDGFGLAAAYPGQVDLVMGTFSKGLGGFGAYVTCSHALRAYLINRAGGFIYSTALPPGVLGAMDAALELLPQMGEVRARVLAGAQRVRAALRAAGLDTGNSSTPIIPVMVGDEQRTLALSEGLRAEGLLGIAIRPPTVPEGTSRLRLSLSAAHSDEDWSLLAAAVPRCLREING.

Substrate is bound at residue arginine 22. 109–110 (GY) lines the pyridoxal 5'-phosphate pocket. Residue histidine 139 coordinates substrate. Residues serine 187, 212-215 (DEAH), and 241-244 (TFSK) contribute to the pyridoxal 5'-phosphate site. Lysine 244 bears the N6-(pyridoxal phosphate)lysine mark. Threonine 358 contacts substrate.

The protein belongs to the class-II pyridoxal-phosphate-dependent aminotransferase family. BioF subfamily. In terms of assembly, homodimer. Requires pyridoxal 5'-phosphate as cofactor.

It carries out the reaction 6-carboxyhexanoyl-[ACP] + L-alanine + H(+) = (8S)-8-amino-7-oxononanoate + holo-[ACP] + CO2. Its pathway is cofactor biosynthesis; biotin biosynthesis. Catalyzes the decarboxylative condensation of pimeloyl-[acyl-carrier protein] and L-alanine to produce 8-amino-7-oxononanoate (AON), [acyl-carrier protein], and carbon dioxide. The chain is Putative 8-amino-7-oxononanoate synthase (bioF) from Magnetococcus marinus (strain ATCC BAA-1437 / JCM 17883 / MC-1).